Here is a 319-residue protein sequence, read N- to C-terminus: Aspartate carbamoyltransferase catalytic subunit (319 aa).

Carbamoyl phosphate contacts are provided by arginine 65 and threonine 66. Position 93 (lysine 93) interacts with L-aspartate. 3 residues coordinate carbamoyl phosphate: arginine 115, histidine 149, and glutamine 152. L-aspartate is bound by residues arginine 182 and arginine 237. Carbamoyl phosphate contacts are provided by glycine 278 and proline 279.

Belongs to the aspartate/ornithine carbamoyltransferase superfamily. ATCase family. As to quaternary structure, heterododecamer (2C3:3R2) of six catalytic PyrB chains organized as two trimers (C3), and six regulatory PyrI chains organized as three dimers (R2).

The catalysed reaction is carbamoyl phosphate + L-aspartate = N-carbamoyl-L-aspartate + phosphate + H(+). Its pathway is pyrimidine metabolism; UMP biosynthesis via de novo pathway; (S)-dihydroorotate from bicarbonate: step 2/3. Its function is as follows. Catalyzes the condensation of carbamoyl phosphate and aspartate to form carbamoyl aspartate and inorganic phosphate, the committed step in the de novo pyrimidine nucleotide biosynthesis pathway. The sequence is that of Aspartate carbamoyltransferase catalytic subunit from Azoarcus sp. (strain BH72).